The sequence spans 145 residues: Brain and acute leukemia cytoplasmic protein (145 aa).

Residue Gly2 is the site of N-myristoyl glycine attachment. Residue Cys3 is the site of S-palmitoyl cysteine attachment. The tract at residues 3-35 (CGGSRADAIEPRYYESWTRETESTWLTYTDSDA) is interaction with CAMK2A. The segment at 36 to 113 (LPSAAATDSG…GLWTTEAKRD (78 aa)) is disordered. Residues 83 to 106 (CGTQCPNSQSLSSGPLTQKQNGLW) are compositionally biased toward polar residues.

Interacts with CAMK2A. In terms of processing, palmitoylation and myristoylation target the protein to the lipid rafts. As to expression, predominantly expressed in the brain (at protein level). Within the brain, found in most of forebrain structures, including the cerebral cortex, hippocampal formation, olfactory bulb, anterior olfactory nuclei, piriform cortex, tenia tecta and amygdaloid nuclei. Not detected in glial cells.

The protein resides in the cytoplasm. The protein localises to the synapse. It is found in the synaptosome. Its subcellular location is the membrane raft. It localises to the postsynaptic density. In terms of biological role, may play a synaptic role at the postsynaptic lipid rafts possibly through interaction with CAMK2A. This is Brain and acute leukemia cytoplasmic protein (Baalc) from Rattus norvegicus (Rat).